A 697-amino-acid polypeptide reads, in one-letter code: Serine/threonine-protein kinase tousled-like 2 (697 aa).

Disordered stretches follow at residues 27-136 (KAPL…TAPV) and 289-315 (LAKR…NKTN). Polar residues predominate over residues 31–44 (NSESSNQSLCSLGS). The span at 46-62 (SDKELEQTPEKKQNDQR) shows a compositional bias: basic and acidic residues. Positions 111–131 (SSPQHSLSNPLPLPSQQCSPP) are enriched in low complexity. Coiled coils occupy residues 264–293 (AFQN…AKRK) and 334–372 (FKLR…IHNE). Residues 387–666 (YLLLHLLGRG…VQQLACDPYL (280 aa)) form the Protein kinase domain. ATP-binding positions include 393–401 (LGRGGFSEV) and Lys416. The active-site Proton acceptor is the Asp517.

Belongs to the protein kinase superfamily. Ser/Thr protein kinase family. In terms of assembly, monomer. May form homodimers; homodimerization may enhance autophosphoylation and enzymatic activity. Heterodimer with TLK1. Mg(2+) is required as a cofactor. In terms of processing, phosphorylated. Autophosphorylated; phosphorylation promotes the assembly of higher order oligomers and enzymatic activity.

Its subcellular location is the nucleus. It is found in the nucleoplasm. The protein localises to the cytoplasm. It localises to the perinuclear region. The protein resides in the cytoskeleton. It catalyses the reaction L-seryl-[protein] + ATP = O-phospho-L-seryl-[protein] + ADP + H(+). It carries out the reaction L-threonyl-[protein] + ATP = O-phospho-L-threonyl-[protein] + ADP + H(+). Serine/threonine-protein kinase involved in the process of chromatin assembly and probably also DNA replication, transcription, repair, and chromosome segregation. Negative regulator of amino acid starvation-induced autophagy. The polypeptide is Serine/threonine-protein kinase tousled-like 2 (Xenopus tropicalis (Western clawed frog)).